A 398-amino-acid chain; its full sequence is MASSVDMKAIRDAQRAEGPATILAIGTATPANCVYQADYPDYYFRITKSEHMVDLKEKFKRMCDKSMIRKRYMHITEEYLKQNPNMCAYMAPSLDVRQDLVVVEVPKLGKEAAMKAIKEWGHPKSKITHLIFCTTSGVDMPGADYQLTKLLGLRPSVKRFMMYQQGCFAGGTVLRLAKDLAENNKGARVLVVCSEITAVTFRGPNDTHLDSLVGQALFGDGAAAVIVGSDPDLTTERPLFEMVSAAQTILPDSEGAIDGHLREVGLTFHLLKDVPGLISKNIEKALTTAFSPLGINDWNSIFWIAHPGGPAILDQVELKLGLKEEKLRATRHVLSEYGNMSSACVLFIIDEMRKKSSENGAGTTGEGLEWGVLFGFGPGLTVETVVLHSVPTTVTVAV.

C167 is a catalytic residue.

Belongs to the thiolase-like superfamily. Chalcone/stilbene synthases family.

The catalysed reaction is (E)-4-coumaroyl-CoA + 3 malonyl-CoA + 3 H(+) = 2',4,4',6'-tetrahydroxychalcone + 3 CO2 + 4 CoA. It participates in secondary metabolite biosynthesis; flavonoid biosynthesis. The primary product of this enzyme is 4,2',4',6'-tetrahydroxychalcone (also termed naringenin-chalcone or chalcone) which can under specific conditions spontaneously isomerize into naringenin. This Gerbera hybrida (Daisy) protein is Chalcone synthase 1 (CHS1).